Consider the following 519-residue polypeptide: Light-independent protochlorophyllide reductase subunit B (519 aa).

Residue Asp36 coordinates [4Fe-4S] cluster. Catalysis depends on Asp274, which acts as the Proton donor. Residue 409–410 coordinates substrate; the sequence is GL. The segment at 426–465 is disordered; it reads DEAGPSHHGGHSPKPSEAARTPDKVEERADPAPEAPQTGS. Positions 445–456 are enriched in basic and acidic residues; that stretch reads RTPDKVEERADP.

This sequence belongs to the ChlB/BchB/BchZ family. Protochlorophyllide reductase is composed of three subunits; BchL, BchN and BchB. Forms a heterotetramer of two BchB and two BchN subunits. [4Fe-4S] cluster serves as cofactor.

It carries out the reaction chlorophyllide a + oxidized 2[4Fe-4S]-[ferredoxin] + 2 ADP + 2 phosphate = protochlorophyllide a + reduced 2[4Fe-4S]-[ferredoxin] + 2 ATP + 2 H2O. Its pathway is porphyrin-containing compound metabolism; bacteriochlorophyll biosynthesis (light-independent). Functionally, component of the dark-operative protochlorophyllide reductase (DPOR) that uses Mg-ATP and reduced ferredoxin to reduce ring D of protochlorophyllide (Pchlide) to form chlorophyllide a (Chlide). This reaction is light-independent. The NB-protein (BchN-BchB) is the catalytic component of the complex. The polypeptide is Light-independent protochlorophyllide reductase subunit B (Jannaschia sp. (strain CCS1)).